The chain runs to 396 residues: MAKAKFERTKPHVNIGTIGHVDHGKTTLTAAITKVLHDKYPDLNESRAFDQIDNAPEERQRGITINISHVEYQTDKRHYAHVDAPGHADYIKNMITGAAQMDGAILVVAATDGPMPQTREHVLLARQVGVPYILVALNKADMVDDEELIELVEMEVRELLAAQDFDEEAPVVKVSALKALEGDEKWVKSVEELMEAVDESIPDPVRETDKPFLMPVEDVFTITGRGTVVTGRVERGIINVNEEVEIVGIRPDTTKTTVTGVEMFRKLLDQGQAGDNVGLLLRGIKREDVERGQVVVKPGTTTPHTDFEGSVYILSKDEGGRHTPFFNNYRPQFYFRTTDVTGVVTLPEGTEMVMPGDNTDISVKLIQPVAMDEGLRFAIREGGRTVGAGRVTKIIK.

The tr-type G domain maps to 10–205 (KPHVNIGTIG…AVDESIPDPV (196 aa)). Residues 19 to 26 (GHVDHGKT) are G1. Residue 19–26 (GHVDHGKT) coordinates GTP. Residue Thr26 coordinates Mg(2+). The tract at residues 62–66 (GITIN) is G2. The interval 83–86 (DAPG) is G3. GTP contacts are provided by residues 83-87 (DAPGH) and 138-141 (NKAD). Residues 138 to 141 (NKAD) are G4. The G5 stretch occupies residues 175 to 177 (SAL).

The protein belongs to the TRAFAC class translation factor GTPase superfamily. Classic translation factor GTPase family. EF-Tu/EF-1A subfamily. As to quaternary structure, monomer.

Its subcellular location is the cytoplasm. It catalyses the reaction GTP + H2O = GDP + phosphate + H(+). Its function is as follows. GTP hydrolase that promotes the GTP-dependent binding of aminoacyl-tRNA to the A-site of ribosomes during protein biosynthesis. The sequence is that of Elongation factor Tu from Mycolicibacterium vanbaalenii (strain DSM 7251 / JCM 13017 / BCRC 16820 / KCTC 9966 / NRRL B-24157 / PYR-1) (Mycobacterium vanbaalenii).